Consider the following 397-residue polypeptide: Ribosomal RNA large subunit methyltransferase I (397 aa).

Positions S2 to F79 constitute a PUA domain.

This sequence belongs to the methyltransferase superfamily. RlmI family.

It is found in the cytoplasm. It catalyses the reaction cytidine(1962) in 23S rRNA + S-adenosyl-L-methionine = 5-methylcytidine(1962) in 23S rRNA + S-adenosyl-L-homocysteine + H(+). Functionally, specifically methylates the cytosine at position 1962 (m5C1962) of 23S rRNA. The sequence is that of Ribosomal RNA large subunit methyltransferase I from Aeromonas hydrophila subsp. hydrophila (strain ATCC 7966 / DSM 30187 / BCRC 13018 / CCUG 14551 / JCM 1027 / KCTC 2358 / NCIMB 9240 / NCTC 8049).